A 127-amino-acid chain; its full sequence is Fluoride-specific ion channel FluC (127 aa).

Helical transmembrane passes span 4–24 (LLLA…LLSM), 35–55 (LGTL…FAWF), 71–91 (TGFC…VFLL), and 103–123 (VFVN…LFSA). Na(+) contacts are provided by Gly-75 and Thr-78.

Belongs to the fluoride channel Fluc/FEX (TC 1.A.43) family.

It localises to the cell inner membrane. The catalysed reaction is fluoride(in) = fluoride(out). Its activity is regulated as follows. Na(+) is not transported, but it plays an essential structural role and its presence is essential for fluoride channel function. Functionally, fluoride-specific ion channel. Important for reducing fluoride concentration in the cell, thus reducing its toxicity. The sequence is that of Fluoride-specific ion channel FluC from Shigella flexneri serotype 5b (strain 8401).